Here is a 334-residue protein sequence, read N- to C-terminus: Mevalonate kinase (334 aa).

Position 110–120 (110–120 (PVGAGLGSSAA)) interacts with ATP. The active-site Proton acceptor is the Asp-161.

The protein belongs to the GHMP kinase family. Mevalonate kinase subfamily. Homodimer. It depends on Mg(2+) as a cofactor.

It localises to the cytoplasm. It carries out the reaction (R)-mevalonate + ATP = (R)-5-phosphomevalonate + ADP + H(+). It functions in the pathway isoprenoid biosynthesis; isopentenyl diphosphate biosynthesis via mevalonate pathway; isopentenyl diphosphate from (R)-mevalonate: step 1/3. Its function is as follows. Catalyzes the phosphorylation of (R)-mevalonate (MVA) to (R)-mevalonate 5-phosphate (MVAP). Functions in the mevalonate (MVA) pathway leading to isopentenyl diphosphate (IPP), a key precursor for the biosynthesis of isoprenoid compounds such as archaeal membrane lipids. In Thermococcus gammatolerans (strain DSM 15229 / JCM 11827 / EJ3), this protein is Mevalonate kinase.